The following is a 393-amino-acid chain: MNSSYKSRVFNIISIIMVSMLILSLGAFANNNKAKADSHSKQLEINVKSDKVPQKVKDLAQQQFAGYAKALDKQSNAKTGKYELGEAFKIYKFNGEEDNSYYYPVIKDGKIVYTLTLSPKNKDDLNKSKEDMNYSVKISNFIAKDLDQIKDKNSNITVLTDEKGFYFEEDGKVRLVKATPLPGNVKEKESAKTVSSKLKQELKNTVTPTKVEENEAIQEDQVQYENTLKNFKIREQQFDNSWCAGFSMAALLNATKNTDTYNAHDIMRTLYPEVSEQDLPNCSTFPNQMIEYGKSQGRDIHYQEGVPSYEQVDQLTKDNVGIMILAQSVSQNPNDPHLGHALAVVGNAKINDQEKLIYWNPWDTELSIQDADSSLLHLSFNRDYNWYGSMIGY.

Residues 1 to 36 (MNSSYKSRVFNIISIIMVSMLILSLGAFANNNKAKA) form the signal peptide. The propeptide occupies 37–219 (DSHSKQLEIN…KVEENEAIQE (183 aa)). Residues cysteine 243, histidine 340, and asparagine 360 contribute to the active site.

The protein belongs to the peptidase C47 family. In the cytoplasm, prematurely activated/folded SspB forms a stable non-covalent complex with SspC. Proteolytically cleaved by staphylococcal serine protease (SspA).

The protein resides in the secreted. Its activity is regulated as follows. Prematurely activated/folded staphopain B is inhibited by staphostatin B (SspC), which is probably required to protect staphylococcal cytoplasmic proteins from degradation by SspB. Its function is as follows. Cysteine protease that plays an important role in the inhibition of host innate immune response. Degrades host elastin, fibrogen, fibronectin and kininogen. Blocks phagocytosis of opsonised S.aureus by neutrophils and monocytes by inducing their death in a proteolytic activity-dependent manner. Decreases surface expression of the 'don't eat me' signal CD31 on neutrophils. Cleaves host galectin-3/LGALS3, thereby inhibiting the neutrophil-activating ability of the lectin. The sequence is that of Staphopain B (sspB) from Staphylococcus aureus (strain MSSA476).